Consider the following 614-residue polypeptide: Threonine--tRNA ligase (614 aa).

Residues 1–138 (MRILTIHARK…PLSELSKTIR (138 aa)) are editing domain. Catalytic stretches follow at residues 195-492 (NRVN…PYIP) and 196-492 (RVND…PYIP). Zn(2+) is bound by residues cysteine 289, histidine 340, and histidine 461.

Belongs to the class-II aminoacyl-tRNA synthetase family. In terms of assembly, homodimer. Zn(2+) serves as cofactor.

Its subcellular location is the cytoplasm. The enzyme catalyses tRNA(Thr) + L-threonine + ATP = L-threonyl-tRNA(Thr) + AMP + diphosphate + H(+). In terms of biological role, catalyzes the attachment of threonine to tRNA(Thr) in a two-step reaction: L-threonine is first activated by ATP to form Thr-AMP and then transferred to the acceptor end of tRNA(Thr). Also edits incorrectly charged L-seryl-tRNA(Thr). This Staphylothermus marinus (strain ATCC 43588 / DSM 3639 / JCM 9404 / F1) protein is Threonine--tRNA ligase.